Here is a 432-residue protein sequence, read N- to C-terminus: MASSVRLVKKPVLVAPVDPTPSTVLSLSSLDSQLFLRFPIEYLLVYASPHGVDRAVTAARVKAALARSLVPYYPLAGRVKTRPDSTGLDVVCQAQGAGLLEAVSDYTASDFQRAPRSVTEWRKLLLVEVFKVVPPLVVQLTWLSDGCVALGVGFSHCVIDGIGSSEFLNLFAELATGRARLSEFQPKPVWDRHLLNSAGRTNLGTHPEFGRVPDLSGFVTRFTQERLSPTSITFDKTWLKELKNIAMSTSQPGEFPYTSFEVLSGHIWRSWARSLNLPAKQVLKLLFSINIRNRVKPSLPAGYYGNAFVLGCAQTSVKDLTEKGLGYCADLVRGAKERVGDEYAREVVESVSWPRRASPDSVGVLIISQWSRLGLDRVDFGLGRPVQVGPICCDRYCLFLPVRESTESVKVMVAVPTSAVDRYEYFIRSPYS.

Residues His-156 and Asp-379 each act as proton acceptor in the active site.

Belongs to the plant acyltransferase family. In terms of tissue distribution, expressed in fruit.

It carries out the reaction 2-(methylsulfanyl)acetyl-CoA + butan-1-ol = butyl 2-(methylsulfanyl)acetate + CoA. The catalysed reaction is ethanol + acetyl-CoA = ethyl acetate + CoA. The enzyme catalyses butan-1-ol + acetyl-CoA = butyl acetate + CoA. It catalyses the reaction butan-1-ol + propanoyl-CoA = butyl propanoate + CoA. Functionally, involved in the biosynthesis of volatile esters which confer kiwifruit flavor. Alcohol acyl transferase that can use a wide range of alcohols as substrate to produce esters. Exhibits acetyl-CoA:alcohol O-acyltransferase activity. In Actinidia eriantha (Velvet vine), this protein is Alcohol acyltransferase 9.